The primary structure comprises 936 residues: DNA replication licensing factor MCM2 (936 aa).

Disordered stretches follow at residues 1 to 105 and 126 to 190; these read MAGE…GQAM and KLPH…EDDN. Low complexity predominate over residues 10–19; the sequence is PSSPASPSSA. Over residues 20-36 the composition is skewed to polar residues; it reads GFNTDQLPISTSQNSEN. Acidic residues-rich tracts occupy residues 53 to 69 and 180 to 190; these read EPDEAEDEEEEEGEDLF and QTDDYQDEDDN. The C4-type zinc-finger motif lies at 355 to 381; the sequence is CNKCGAVLGPFFQNSYSEVKVGSCSEC. The MCM domain maps to 499–705; the sequence is IVERIIKSIA…VTDEMLAEFV (207 aa). An ATP-binding site is contributed by 549 to 556; sequence GDPGTAKS. The Arginine finger signature appears at 681-684; it reads SRFD. A disordered region spans residues 711–739; sequence KSQPKGGKMEDSDPEDGIQGSSGSTDPEV.

Belongs to the MCM family. In terms of assembly, component of the minichromosome maintenance (MCM) complex, a heterotetramer composed of MCM2, MCM3, MCM4, MCM5, MCM6 and MCM7. Interacts with ETG1 and the replication-associated protein of the geminivirus mungbean yellow mosaic virus (MYMV). Expressed in root apical meristem, lateral root meristem primordia, leaf primordia, shoot apical meristem and flower buds.

The protein resides in the nucleus. It carries out the reaction ATP + H2O = ADP + phosphate + H(+). Its function is as follows. Probable component of the MCM2-7 complex (MCM complex) that may function as a DNA helicase and which is essential to undergo a single round of replication initiation and elongation per cell cycle in eukaryotic cells. May play a crucial role in the control of de-differentiation and cell proliferation processes required for lateral root formation. Is essential for embryo development. Is involved in the geminivirus mungbean yellow mosaic virus (MYMV) DNA replication, presumably in conjunction with other host factors. This chain is DNA replication licensing factor MCM2 (MCM2), found in Arabidopsis thaliana (Mouse-ear cress).